Here is a 942-residue protein sequence, read N- to C-terminus: MDRFRIQDGKYVVEKEIGKGSFATVYRGHVTTDPKSHIAVKAVARSKLKNKKLLENLEIEIAILKKIKHPHIVGLIDCERTTTDFYLVMDYCALGDLTFLIKKRKELENNHPLLQTVFNKYPPPSKEHNGLNRAFVVCYLQQLASALKFLRSKNLVHRDIKPQNLLLATPLTNYRDSKTFHELGYVGIYNLPILKIADFGFARFLPSTSLAETLCGSPLYMAPEILNYQKYNAKADLWSVGTVLFEMCCGVPPFTASNHLELFKKIKRAHDEINFPEVCEVEDGLKELICSLLTFDPAKRIGFEEFFNNKIVTEDLSHYEVDENTELESKSKDLQESNMFVSEFLIKKRNQKGVSSRKDTEFIPKSKQEPMLDQAYKDETEMETGVKYGVNIAPEVYQNEMIDPEKLAAKLIAAKQLGSDEKLTNKNISHLLSSNSSRVNKLDKSNLSGKSDSSLDRDYVVVEKKAVEVNSLADDLAQANVGNNDEAVKDQNIKTLEQPHIQVHQPHNDIQNLQRAPSTTSGGTSSRRASLVERRLSISSLNPSNALSRALGLASTRIFGSSAQTNKNQTSNSTSPNYTQPLLNSQIFYDLTENLILHTETLNQPALINVDHAKGINEVIRILESLSAKAFVVYSYAEVKYAQIIPLPQAVIRASPALQFEKRLSDDSNPVIDEDSDEELDVQKNLSNTLLSETVNTRYRLRNDSSRNSYNKRNSFNKERFSFSSQGSNNSKRTNSYSSTLLPAEIISISKEAIVLYMKALQILAQSMKITSKWWYSCQEKICSLRLNILVQWIREKFNECLDKTDFLRMKLEEYENSKPGTHNQSPKSKISNDSNEDNVAEKVYLEKLLYDRALEISKYAANLELQGQNLHICELAYATSLWMLTISLENSPYTDQGEDEYDEFLKDTNDVLDSEDKIIIGKYIKSISHRLKMLRQKMAKY.

One can recognise a Protein kinase domain in the interval 11–312; sequence YVVEKEIGKG…FEEFFNNKIV (302 aa). Residues 17–25 and Lys41 each bind ATP; that span reads IGKGSFATV. Asp159 serves as the catalytic Proton acceptor. Positions 435 to 452 are enriched in polar residues; it reads NSSRVNKLDKSNLSGKSD. Disordered stretches follow at residues 435–454, 505–529, and 817–836; these read NSSR…SDSS, QPHN…SRRA, and NSKP…NDSN. Low complexity predominate over residues 515–529; the sequence is RAPSTTSGGTSSRRA. Residues 819 to 834 show a composition bias toward polar residues; that stretch reads KPGTHNQSPKSKISND.

It belongs to the protein kinase superfamily. Ser/Thr protein kinase family. APG1/unc-51/ULK1 subfamily. As to quaternary structure, homodimer. Forms a ternary complex with ATG13 and ATG17.

Its subcellular location is the cytoplasm. It is found in the preautophagosomal structure membrane. It carries out the reaction L-seryl-[protein] + ATP = O-phospho-L-seryl-[protein] + ADP + H(+). The catalysed reaction is L-threonyl-[protein] + ATP = O-phospho-L-threonyl-[protein] + ADP + H(+). Functionally, serine/threonine protein kinase involved in the cytoplasm to vacuole transport (Cvt) and found to be essential in autophagy, where it is required for the formation of autophagosomes. Involved in the clearance of protein aggregates which cannot be efficiently cleared by the proteasome. Required for selective autophagic degradation of the nucleus (nucleophagy) as well as for mitophagy which contributes to regulate mitochondrial quantity and quality by eliminating the mitochondria to a basal level to fulfill cellular energy requirements and preventing excess ROS production. Also involved in endoplasmic reticulum-specific autophagic process, in selective removal of ER-associated degradation (ERAD) substrates. Plays a key role in ATG9 and ATG23 cycling through the pre-autophagosomal structure and is necessary to promote ATG18 binding to ATG9 through phosphorylation of ATG9. Catalyzes phosphorylation of ATG4, decreasing the interaction between ATG4 and ATG8 and impairing deconjugation of PE-conjugated forms of ATG8. Contributes to virulence by conferring resistance to unstable nutrient environments and immune defense of hosts. This chain is Serine/threonine-protein kinase ATG1, found in Candida glabrata (strain ATCC 2001 / BCRC 20586 / JCM 3761 / NBRC 0622 / NRRL Y-65 / CBS 138) (Yeast).